The primary structure comprises 280 residues: 4-deoxy-L-threo-5-hexosulose-uronate ketol-isomerase 1 (280 aa).

Zn(2+) is bound by residues His198, His200, Glu205, and His247.

This sequence belongs to the KduI family. It depends on Zn(2+) as a cofactor.

The catalysed reaction is 5-dehydro-4-deoxy-D-glucuronate = 3-deoxy-D-glycero-2,5-hexodiulosonate. Its pathway is glycan metabolism; pectin degradation; 2-dehydro-3-deoxy-D-gluconate from pectin: step 4/5. Functionally, catalyzes the isomerization of 5-dehydro-4-deoxy-D-glucuronate to 3-deoxy-D-glycero-2,5-hexodiulosonate. In Bacteroides thetaiotaomicron (strain ATCC 29148 / DSM 2079 / JCM 5827 / CCUG 10774 / NCTC 10582 / VPI-5482 / E50), this protein is 4-deoxy-L-threo-5-hexosulose-uronate ketol-isomerase 1 (kduI1).